The following is a 124-amino-acid chain: Small ribosomal subunit protein uS12c (124 aa).

Disordered regions lie at residues Met-1 to Pro-28 and Ala-104 to Ser-124. Composition is skewed to basic residues over residues Glu-11 to Lys-20 and Asp-109 to Ser-124.

It belongs to the universal ribosomal protein uS12 family. As to quaternary structure, part of the 30S ribosomal subunit.

The protein localises to the plastid. Its subcellular location is the chloroplast. Its function is as follows. With S4 and S5 plays an important role in translational accuracy. Located at the interface of the 30S and 50S subunits. The chain is Small ribosomal subunit protein uS12c (rps12) from Porphyra purpurea (Red seaweed).